A 41-amino-acid polypeptide reads, in one-letter code: Photosystem II reaction center protein L (41 aa).

Residues S20–L40 traverse the membrane as a helical segment.

This sequence belongs to the PsbL family. As to quaternary structure, PSII is composed of 1 copy each of membrane proteins PsbA, PsbB, PsbC, PsbD, PsbE, PsbF, PsbH, PsbI, PsbJ, PsbK, PsbL, PsbM, PsbT, PsbX, PsbY, PsbZ, Psb30/Ycf12, peripheral proteins PsbO, CyanoQ (PsbQ), PsbU, PsbV and a large number of cofactors. It forms dimeric complexes.

Its subcellular location is the cellular thylakoid membrane. Functionally, one of the components of the core complex of photosystem II (PSII). PSII is a light-driven water:plastoquinone oxidoreductase that uses light energy to abstract electrons from H(2)O, generating O(2) and a proton gradient subsequently used for ATP formation. It consists of a core antenna complex that captures photons, and an electron transfer chain that converts photonic excitation into a charge separation. This subunit is found at the monomer-monomer interface and is required for correct PSII assembly and/or dimerization. This chain is Photosystem II reaction center protein L, found in Synechococcus sp. (strain JA-2-3B'a(2-13)) (Cyanobacteria bacterium Yellowstone B-Prime).